The chain runs to 610 residues: MNSQDLKKRQEKIRNFSIIAHIDHGKSTLADRILEKTETVSSREMQAQLLDSMDLERERGITIKLNAIELNYTAKDGETYIFHLIDTPGHVDFTYEVSRSLAACEGAILVVDAAQGIEAQTLANVYLALDNDLEILPVINKIDLPAADPERVRHEVEDVIGLDASEAVLASAKAGIGIEEILEQIVEKVPAPTGDVDAPLQALIFDSVYDAYRGVILQVRIVNGIVKSGDKIQMMSNGKTFDVTEVGIFTPKAVGRDFLATGDVGYVAASIKTVADTRVGDTVTLANNPAKEALHGYKQMNPMVFAGIYPIESNKYNDLREALEKLQLNDASLQFEPETSQALGFGFRCGFLGLLHMDVIQERLEREFNIDLIMTAPSVVYHVHTTDEDMIEVSNPSEFPDPTRVAFIEEPYVKAQIMVPQEFVGAVMELSQRKRGDFVTMDYIDDNRVNVIYQIPLAEIVFDFFDKLKSSTRGYASFDYDMSEYRRSQLVKMDILLNGDKVDALSFIVHKEFAYERGKIIVEKLKKIIPRQQFEVPIQAAIGQKIVARSDIKALRKNVLAKCYGGDVSRKRKLLEKQKAGKKRMKAIGSVEVPQEAFLSVLSMDDDAKK.

The tr-type G domain occupies 11 to 193 (EKIRNFSIIA…QIVEKVPAPT (183 aa)). Residues 23-28 (DHGKST) and 140-143 (NKID) each bind GTP.

Belongs to the TRAFAC class translation factor GTPase superfamily. Classic translation factor GTPase family. LepA subfamily.

The protein resides in the cell membrane. It catalyses the reaction GTP + H2O = GDP + phosphate + H(+). Its function is as follows. Required for accurate and efficient protein synthesis under certain stress conditions. May act as a fidelity factor of the translation reaction, by catalyzing a one-codon backward translocation of tRNAs on improperly translocated ribosomes. Back-translocation proceeds from a post-translocation (POST) complex to a pre-translocation (PRE) complex, thus giving elongation factor G a second chance to translocate the tRNAs correctly. Binds to ribosomes in a GTP-dependent manner. In Streptococcus pyogenes serotype M2 (strain MGAS10270), this protein is Elongation factor 4.